A 560-amino-acid chain; its full sequence is Putative transport protein VS_1837 (560 aa).

5 helical membrane passes run 5–25, 37–57, 66–86, 91–111, and 155–175; these read VVLLLKQNPILLIFVVLSIGL, LGNSIGVLITSLIMGHLGFSF, FMLFIYCVGIEAGPNFFGIFF, HYLILSLVVLSTAIALTYFCS, and LGLVIENLSVGYAMAYLVGLI. RCK C-terminal domains lie at 203–292 and 293–376; these read RGLG…FRNG and KEVF…KIGF. 6 consecutive transmembrane segments (helical) span residues 386–406, 409–429, 450–470, 478–498, 506–526, and 539–559; these read LTAFCSFFILGILFGLITMTF, VSFGLGNAVGLLLSGIMLGFL, LGLMFFMVGIGLSAGGKIFEH, VIGIALIVSVLPVFFAYLVGA, ALLFGAIIGARTCAPAMDIVN, and AGTYAIANILMTLAGTFIIII.

This sequence belongs to the AAE transporter (TC 2.A.81) family. YbjL subfamily.

It localises to the cell membrane. This is Putative transport protein VS_1837 from Vibrio atlanticus (strain LGP32) (Vibrio splendidus (strain Mel32)).